We begin with the raw amino-acid sequence, 433 residues long: Protein FAM98B (433 aa).

The disordered stretch occupies residues 303–433 (GRVPDRGGRP…GGGGGGYRRY (131 aa)). Residues 305–314 (VPDRGGRPNE) are compositionally biased toward basic and acidic residues. Residues 331-433 (GGGGRGGWGG…GGGGGGYRRY (103 aa)) show a composition bias toward gly residues.

Belongs to the FAM98 family. Homodimer. Component of the tRNA-splicing ligase complex. Interacts with FAM98A. In terms of tissue distribution, expressed strongly in colorectal cancer tissues compared to wild-type colon samples (at protein level). Expressed strongly in colorectal cancer tissues compared to wild-type colon samples.

Its subcellular location is the nucleus. It is found in the cytoplasm. In terms of biological role, positively stimulates PRMT1-induced protein arginine dimethylated arginine methylation. In Homo sapiens (Human), this protein is Protein FAM98B (FAM98B).